The sequence spans 485 residues: ATP synthase subunit beta 1 (485 aa).

Residue 157–164 (GGAGVGKT) participates in ATP binding.

It belongs to the ATPase alpha/beta chains family. F-type ATPases have 2 components, CF(1) - the catalytic core - and CF(0) - the membrane proton channel. CF(1) has five subunits: alpha(3), beta(3), gamma(1), delta(1), epsilon(1). CF(0) has three main subunits: a(1), b(2) and c(9-12). The alpha and beta chains form an alternating ring which encloses part of the gamma chain. CF(1) is attached to CF(0) by a central stalk formed by the gamma and epsilon chains, while a peripheral stalk is formed by the delta and b chains.

Its subcellular location is the cell inner membrane. The enzyme catalyses ATP + H2O + 4 H(+)(in) = ADP + phosphate + 5 H(+)(out). Its function is as follows. Produces ATP from ADP in the presence of a proton gradient across the membrane. The catalytic sites are hosted primarily by the beta subunits. This is ATP synthase subunit beta 1 from Psychromonas ingrahamii (strain DSM 17664 / CCUG 51855 / 37).